The sequence spans 410 residues: Lipid droplet-regulating VLDL assembly factor AUP1 (410 aa).

M1 is subject to N-acetylmethionine. Over 1 to 20 (MELPSGPGPERLFDSHRLPG) the chain is Cytoplasmic. Phosphoserine is present on S5. An intramembrane segment occupies 21 to 41 (DCFLLLVLLLYAPVGFCLLVL). Residues 42-410 (RLFLGIHVFL…FTERRAQEAD (369 aa)) lie on the Cytoplasmic side of the membrane. The interval 255–295 (TGTRLTPADKAEHMKRQRHPRLRPQSAQSSFPPSPGPSPDV) is disordered. Phosphoserine is present on residues S288 and S292. One can recognise a CUE domain in the interval 296–338 (QLATLAQRVKEVLPHVPLGVIQRDLAKTGCVDLTITNLLEGAV). Positions 350 to 369 (QSLPTASASKFPSSGPVTPQ) are disordered. Position 363 is a phosphoserine (S363). At T367 the chain carries Phosphothreonine.

This sequence belongs to the AUP1 family. As to quaternary structure, identified in a complex that contains SEL1L, OS9, FAF2/UBXD8, UBE2J1/UBC6E and AUP1. Interacts with the cytoplasmic tail of ITGA2B, ITGA1, ITGA2, ITGA5, ITGAV and ITGAM. Interacts (via C-terminus) with ubiquitin-conjugating enzyme UBE2G2; the interaction recruits UBE2G2 to lipid droplets. Interacts with ubiquitin ligases AMFR/gp78 and RNF139/TRC8; this promotes interaction of UBE2G2 with AMFR and RNF139. Interacts with apolipoprotein APOB. (Microbial infection) Interacts with Dengue virus NS4A; the interaction occurs in the presence of Dengue virus NS4B and induces lipophagy which facilitates production of virus progeny. Monoubiquitinated and diubiquitinated. In terms of processing, (Microbial infection) Not ubiquitinated following Dengue virus infection. In terms of tissue distribution, detected in blood platelets and leukocytes (at protein level). Ubiquitous. Highly expressed in placenta, liver, kidney, skeletal muscle, heart and brain.

The protein resides in the endoplasmic reticulum membrane. It localises to the lipid droplet. It is found in the cytoplasmic vesicle. Its subcellular location is the autophagosome. Plays a role in the translocation of terminally misfolded proteins from the endoplasmic reticulum lumen to the cytoplasm and their degradation by the proteasome. Plays a role in lipid droplet formation. Induces lipid droplet clustering. Recruits ubiquitin-conjugating enzyme UBE2G2 to lipid droplets which facilitates its interaction with ubiquitin ligases AMFR/gp78 and RNF139/TRC8, leading to sterol-induced ubiquitination of HMGCR and its subsequent proteasomal degradation. Also required for the degradation of INSIG1, SREBF1 and SREBF2. Plays a role in regulating assembly and secretion of very low density lipoprotein particles and stability of apolipoprotein APOB. Functionally, (Microbial infection) Following Dengue virus infection, required for induction of lipophagy which facilitates production of virus progeny particles. The sequence is that of Lipid droplet-regulating VLDL assembly factor AUP1 from Homo sapiens (Human).